The following is a 65-amino-acid chain: Large ribosomal subunit protein uL30 (65 aa).

Belongs to the universal ribosomal protein uL30 family. Part of the 50S ribosomal subunit.

The protein is Large ribosomal subunit protein uL30 of Brucella suis (strain ATCC 23445 / NCTC 10510).